Consider the following 199-residue polypeptide: ATP-dependent Clp protease proteolytic subunit (199 aa).

Catalysis depends on Ser-102, which acts as the Nucleophile. His-127 is an active-site residue.

It belongs to the peptidase S14 family. As to quaternary structure, component of the chloroplastic Clp protease core complex.

The protein resides in the plastid. The protein localises to the chloroplast stroma. The catalysed reaction is Hydrolysis of proteins to small peptides in the presence of ATP and magnesium. alpha-casein is the usual test substrate. In the absence of ATP, only oligopeptides shorter than five residues are hydrolyzed (such as succinyl-Leu-Tyr-|-NHMec, and Leu-Tyr-Leu-|-Tyr-Trp, in which cleavage of the -Tyr-|-Leu- and -Tyr-|-Trp bonds also occurs).. Its function is as follows. Cleaves peptides in various proteins in a process that requires ATP hydrolysis. Has a chymotrypsin-like activity. Plays a major role in the degradation of misfolded proteins. This is ATP-dependent Clp protease proteolytic subunit from Physcomitrium patens (Spreading-leaved earth moss).